We begin with the raw amino-acid sequence, 200 residues long: 3-isopropylmalate dehydratase small subunit (200 aa).

The protein belongs to the LeuD family. LeuD type 1 subfamily. As to quaternary structure, heterodimer of LeuC and LeuD.

It carries out the reaction (2R,3S)-3-isopropylmalate = (2S)-2-isopropylmalate. Its pathway is amino-acid biosynthesis; L-leucine biosynthesis; L-leucine from 3-methyl-2-oxobutanoate: step 2/4. Its function is as follows. Catalyzes the isomerization between 2-isopropylmalate and 3-isopropylmalate, via the formation of 2-isopropylmaleate. This chain is 3-isopropylmalate dehydratase small subunit, found in Campylobacter jejuni subsp. jejuni serotype O:23/36 (strain 81-176).